Here is a 147-residue protein sequence, read N- to C-terminus: Large ribosomal subunit protein uL13 (147 aa).

The protein belongs to the universal ribosomal protein uL13 family. In terms of assembly, part of the 50S ribosomal subunit.

Its function is as follows. This protein is one of the early assembly proteins of the 50S ribosomal subunit, although it is not seen to bind rRNA by itself. It is important during the early stages of 50S assembly. This is Large ribosomal subunit protein uL13 from Nocardia farcinica (strain IFM 10152).